Reading from the N-terminus, the 196-residue chain is Prefoldin subunit 3 (196 aa).

At A2 the chain carries N-acetylalanine. Position 58 is an N6-acetyllysine (K58).

It belongs to the prefoldin subunit alpha family. Heterohexamer of two PFD-alpha type and four PFD-beta type subunits. Binds to the C-terminal part of VHL.

The protein localises to the cytoplasm. It is found in the nucleus. Functionally, binds specifically to cytosolic chaperonin (c-CPN) and transfers target proteins to it. Binds to nascent polypeptide chain and promotes folding in an environment in which there are many competing pathways for nonnative proteins. The protein is Prefoldin subunit 3 (Vbp1) of Mus musculus (Mouse).